The primary structure comprises 431 residues: Tryptophan--tRNA ligase (431 aa).

ATP-binding positions include 12 to 14 and 20 to 21; these read TPS and GN. The 'HIGH' region signature appears at 13–21; it reads PSGTPHLGN. Aspartate 145 is an L-tryptophan binding site. Residues 157–159, leucine 197, and 204–208 each bind ATP; these read GRD and KMSKS. A 'KMSKS' region motif is present at residues 204-208; sequence KMSKS.

The protein belongs to the class-I aminoacyl-tRNA synthetase family. Homodimer.

It is found in the cytoplasm. The enzyme catalyses tRNA(Trp) + L-tryptophan + ATP = L-tryptophyl-tRNA(Trp) + AMP + diphosphate + H(+). In terms of biological role, catalyzes the attachment of tryptophan to tRNA(Trp). This is Tryptophan--tRNA ligase from Xanthomonas campestris pv. campestris (strain ATCC 33913 / DSM 3586 / NCPPB 528 / LMG 568 / P 25).